Reading from the N-terminus, the 268-residue chain is Ubiquinone/menaquinone biosynthesis C-methyltransferase UbiE (268 aa).

The interval 1 to 23 is disordered; it reads MTDQHAFATEQVQLDPTLSPTTE. A compositionally biased stretch (polar residues) spans 10-23; that stretch reads EQVQLDPTLSPTTE. Residues threonine 91, aspartate 112, 140-141, and serine 157 each bind S-adenosyl-L-methionine; that span reads NA.

It belongs to the class I-like SAM-binding methyltransferase superfamily. MenG/UbiE family.

The enzyme catalyses a 2-demethylmenaquinol + S-adenosyl-L-methionine = a menaquinol + S-adenosyl-L-homocysteine + H(+). The catalysed reaction is a 2-methoxy-6-(all-trans-polyprenyl)benzene-1,4-diol + S-adenosyl-L-methionine = a 5-methoxy-2-methyl-3-(all-trans-polyprenyl)benzene-1,4-diol + S-adenosyl-L-homocysteine + H(+). The protein operates within quinol/quinone metabolism; menaquinone biosynthesis; menaquinol from 1,4-dihydroxy-2-naphthoate: step 2/2. Its pathway is cofactor biosynthesis; ubiquinone biosynthesis. In terms of biological role, methyltransferase required for the conversion of demethylmenaquinol (DMKH2) to menaquinol (MKH2) and the conversion of 2-polyprenyl-6-methoxy-1,4-benzoquinol (DDMQH2) to 2-polyprenyl-3-methyl-6-methoxy-1,4-benzoquinol (DMQH2). This Pasteurella multocida (strain Pm70) protein is Ubiquinone/menaquinone biosynthesis C-methyltransferase UbiE.